We begin with the raw amino-acid sequence, 205 residues long: Orotate phosphoribosyltransferase (205 aa).

A 5-phospho-alpha-D-ribose 1-diphosphate-binding site is contributed by 116–124; sequence EDIITTGGS. Residues threonine 120 and arginine 148 each contribute to the orotate site.

The protein belongs to the purine/pyrimidine phosphoribosyltransferase family. PyrE subfamily. As to quaternary structure, homodimer. Mg(2+) is required as a cofactor.

It catalyses the reaction orotidine 5'-phosphate + diphosphate = orotate + 5-phospho-alpha-D-ribose 1-diphosphate. The protein operates within pyrimidine metabolism; UMP biosynthesis via de novo pathway; UMP from orotate: step 1/2. Functionally, catalyzes the transfer of a ribosyl phosphate group from 5-phosphoribose 1-diphosphate to orotate, leading to the formation of orotidine monophosphate (OMP). The polypeptide is Orotate phosphoribosyltransferase (Wolinella succinogenes (strain ATCC 29543 / DSM 1740 / CCUG 13145 / JCM 31913 / LMG 7466 / NCTC 11488 / FDC 602W) (Vibrio succinogenes)).